A 123-amino-acid polypeptide reads, in one-letter code: Large ribosomal subunit protein uL24 (123 aa).

Belongs to the universal ribosomal protein uL24 family. As to quaternary structure, part of the 50S ribosomal subunit.

Its function is as follows. One of two assembly initiator proteins, it binds directly to the 5'-end of the 23S rRNA, where it nucleates assembly of the 50S subunit. Located at the polypeptide exit tunnel on the outside of the subunit. This chain is Large ribosomal subunit protein uL24, found in Methanocella arvoryzae (strain DSM 22066 / NBRC 105507 / MRE50).